The chain runs to 1556 residues: Ferredoxin-dependent glutamate synthase 2 (1556 aa).

The For GATase activity role is filled by Cys37. The 395-residue stretch at 37-431 (CGVGFIANLR…PGQMIAVDLA (395 aa)) folds into the Glutamine amidotransferase type-2 domain. [3Fe-4S] cluster is bound by residues Cys1173, Cys1179, and Cys1184. The segment at 1533 to 1556 (PSEKDSPEANGDVSLTGEKTLTSV) is disordered.

Belongs to the glutamate synthase family. [3Fe-4S] cluster is required as a cofactor. Requires FAD as cofactor. The cofactor is FMN.

It catalyses the reaction 2 oxidized [2Fe-2S]-[ferredoxin] + 2 L-glutamate = L-glutamine + 2 reduced [2Fe-2S]-[ferredoxin] + 2-oxoglutarate + 2 H(+). Its pathway is amino-acid biosynthesis; L-glutamate biosynthesis via GLT pathway; L-glutamate from 2-oxoglutarate and L-glutamine (ferredoxin route): step 1/1. The protein operates within energy metabolism; nitrogen metabolism. The protein is Ferredoxin-dependent glutamate synthase 2 (gltS) of Synechocystis sp. (strain ATCC 27184 / PCC 6803 / Kazusa).